The following is a 989-amino-acid chain: Protease PrtH (989 aa).

Repeats lie at residues 270-323 (TPTD…KCVN) and 528-581 (SPAS…VCVD). The disordered stretch occupies residues 969–989 (PRDTPWRYGKRELPPSASGMR).

Belongs to the peptidase C25 family.

It localises to the cytoplasmic vesicle. Its function is as follows. Cleaves human complement component C3. May enable P.gingivalis to evade complement-mediated killing during the immune response. Plays an important role in soft tissue infections and is a virulence factor. This Porphyromonas gingivalis (strain ATCC BAA-308 / W83) protein is Protease PrtH (prtH).